The sequence spans 398 residues: MIKTAQSVGELTRAIKNELESLFPFVRVKGELSNVKQHSSGHVYLTLKDSEAQIPAVIWKSVRARSPLELRDGLEVIAEGRLEVWPPAGRYQLICTALFETGEGEQRLALERLIAKLAKAGWFDAERKKPIPRIPRRIGMITSPTGAVIRDMSDVFARRFPAAELLLYPVQVQGERAVESIVRALRYFNDPPKPEHKPDVLIVARGGGSSEDLQAFNDEAVAEAIYRSAIPVISAVGHETDLSVADMVADLRAGTPSIAAERAVPDREELLRLIDNLVNRQSILMEGLISGAQLQVDSITSSYAFNRPVQMLGQFEERLALMEKEMKRAIAEKVRDREQQLTAAADRLAMLDINRTLKRGFALVTQDDRYVTSAKSLEADAKIGLTFHDGQREARVTE.

The protein belongs to the XseA family. As to quaternary structure, heterooligomer composed of large and small subunits.

The protein localises to the cytoplasm. It catalyses the reaction Exonucleolytic cleavage in either 5'- to 3'- or 3'- to 5'-direction to yield nucleoside 5'-phosphates.. Bidirectionally degrades single-stranded DNA into large acid-insoluble oligonucleotides, which are then degraded further into small acid-soluble oligonucleotides. The polypeptide is Exodeoxyribonuclease 7 large subunit (Chlorobaculum tepidum (strain ATCC 49652 / DSM 12025 / NBRC 103806 / TLS) (Chlorobium tepidum)).